A 458-amino-acid polypeptide reads, in one-letter code: UPF0210 protein Maeo_1412 (458 aa).

The protein belongs to the UPF0210 family.

The protein is UPF0210 protein Maeo_1412 of Methanococcus aeolicus (strain ATCC BAA-1280 / DSM 17508 / OCM 812 / Nankai-3).